Here is an 83-residue protein sequence, read N- to C-terminus: ATP synthase subunit c (83 aa).

The next 2 helical transmembrane spans lie at Ile-10–Leu-30 and Met-52–Tyr-72.

This sequence belongs to the ATPase C chain family. F-type ATPases have 2 components, F(1) - the catalytic core - and F(0) - the membrane proton channel. F(1) has five subunits: alpha(3), beta(3), gamma(1), delta(1), epsilon(1). F(0) has three main subunits: a(1), b(2) and c(10-14). The alpha and beta chains form an alternating ring which encloses part of the gamma chain. F(1) is attached to F(0) by a central stalk formed by the gamma and epsilon chains, while a peripheral stalk is formed by the delta and b chains.

The protein localises to the cell inner membrane. F(1)F(0) ATP synthase produces ATP from ADP in the presence of a proton or sodium gradient. F-type ATPases consist of two structural domains, F(1) containing the extramembraneous catalytic core and F(0) containing the membrane proton channel, linked together by a central stalk and a peripheral stalk. During catalysis, ATP synthesis in the catalytic domain of F(1) is coupled via a rotary mechanism of the central stalk subunits to proton translocation. In terms of biological role, key component of the F(0) channel; it plays a direct role in translocation across the membrane. A homomeric c-ring of between 10-14 subunits forms the central stalk rotor element with the F(1) delta and epsilon subunits. This is ATP synthase subunit c from Shewanella denitrificans (strain OS217 / ATCC BAA-1090 / DSM 15013).